Consider the following 134-residue polypeptide: Small ribosomal subunit protein uS8 (134 aa).

It belongs to the universal ribosomal protein uS8 family. Part of the 30S ribosomal subunit. Contacts proteins S5 and S12.

Functionally, one of the primary rRNA binding proteins, it binds directly to 16S rRNA central domain where it helps coordinate assembly of the platform of the 30S subunit. This is Small ribosomal subunit protein uS8 from Thermosipho africanus (strain TCF52B).